Here is a 520-residue protein sequence, read N- to C-terminus: L-tyrosine:2-oxoglutarate aminotransferase amt1 (520 aa).

Belongs to the class-I pyridoxal-phosphate-dependent aminotransferase family. Pyridoxal 5'-phosphate is required as a cofactor.

The catalysed reaction is L-tyrosine + 2-oxoglutarate = 3-(4-hydroxyphenyl)pyruvate + L-glutamate. It functions in the pathway secondary metabolite biosynthesis. An L-tyrosine:2-oxoglutarate aminotransferase (probably amt1) and atromentin synthetase nps3 catalyze consecutive steps to turn over L-tyrosine into atromentin, which represents the generic precursor molecule for the entire terphenylquinone and pulvinic acid family of pigments, which are widely distributed secondary metabolites in homobasidiomycetes. The first step catalyzed by amt1 converts L-tyrosine in to 4-hydroxyphenylpyruvate (4-HPP). Adenylation of two 4-HPP monomers by the nps3 adenylation (A) domain, covalent tethering of the monomers as a thioester and oxoester onto the nps3 thiolation (T) and thioesterase (TE) domains, respectively, and symmetric C-C-bond formation between two monomers catalyzed by the nps3 TE domain leads to atromentin. Follow-up products of atromentin in S.lacrymans include atromentic acid, xerocomic acid, isoxerocomic acid and variegatic acid. The protein is L-tyrosine:2-oxoglutarate aminotransferase amt1 (amt1) of Serpula lacrymans var. lacrymans (strain S7.9) (Dry rot fungus).